The following is a 303-amino-acid chain: UDP-N-acetylenolpyruvoylglucosamine reductase (303 aa).

The FAD-binding PCMH-type domain maps to 29-196 (KIGGPADVLV…LEAVLQLEQK (168 aa)). The active site involves Arg-174. Catalysis depends on Ser-225, which acts as the Proton donor. Residue Glu-295 is part of the active site.

Belongs to the MurB family. Requires FAD as cofactor.

Its subcellular location is the cytoplasm. It carries out the reaction UDP-N-acetyl-alpha-D-muramate + NADP(+) = UDP-N-acetyl-3-O-(1-carboxyvinyl)-alpha-D-glucosamine + NADPH + H(+). The protein operates within cell wall biogenesis; peptidoglycan biosynthesis. Cell wall formation. In Bacillus licheniformis (strain ATCC 14580 / DSM 13 / JCM 2505 / CCUG 7422 / NBRC 12200 / NCIMB 9375 / NCTC 10341 / NRRL NRS-1264 / Gibson 46), this protein is UDP-N-acetylenolpyruvoylglucosamine reductase.